A 178-amino-acid chain; its full sequence is Interleukin-10 (178 aa).

A signal peptide spans 1–18 (MHSSALLCCLVVLTGVRA). Cystine bridges form between Cys30–Cys126 and Cys80–Cys132. Asn134 carries an N-linked (GlcNAc...) asparagine glycan.

The protein belongs to the IL-10 family. Homodimer. Interacts with IL10RA and IL10RB.

Its subcellular location is the secreted. Major immune regulatory cytokine that acts on many cells of the immune system where it has profound anti-inflammatory functions, limiting excessive tissue disruption caused by inflammation. Mechanistically, IL10 binds to its heterotetrameric receptor comprising IL10RA and IL10RB leading to JAK1 and STAT2-mediated phosphorylation of STAT3. In turn, STAT3 translocates to the nucleus where it drives expression of anti-inflammatory mediators. Targets antigen-presenting cells (APCs) such as macrophages and monocytes and inhibits their release of pro-inflammatory cytokines including granulocyte-macrophage colony-stimulating factor /GM-CSF, granulocyte colony-stimulating factor/G-CSF, IL-1 alpha, IL-1 beta, IL-6, IL-8 and TNF-alpha. Also interferes with antigen presentation by reducing the expression of MHC-class II and co-stimulatory molecules, thereby inhibiting their ability to induce T cell activation. In addition, controls the inflammatory response of macrophages by reprogramming essential metabolic pathways including mTOR signaling. The protein is Interleukin-10 (IL10) of Papio hamadryas (Hamadryas baboon).